Here is a 409-residue protein sequence, read N- to C-terminus: Putative competence-damage inducible protein (409 aa).

The protein belongs to the CinA family.

This Clostridium botulinum (strain Langeland / NCTC 10281 / Type F) protein is Putative competence-damage inducible protein.